A 224-amino-acid chain; its full sequence is ATP-dependent dethiobiotin synthetase BioD (224 aa).

12 to 17 (GVGKTF) contributes to the ATP binding site. Thr16 contributes to the Mg(2+) binding site. Lys37 is an active-site residue. Thr41 is a substrate binding site. Glu107 lines the Mg(2+) pocket. ATP is bound by residues 107 to 110 (EGAG), 167 to 168 (GS), 197 to 199 (PEG), and Glu204.

It belongs to the dethiobiotin synthetase family. As to quaternary structure, homodimer. Mg(2+) is required as a cofactor.

It is found in the cytoplasm. It catalyses the reaction (7R,8S)-7,8-diammoniononanoate + CO2 + ATP = (4R,5S)-dethiobiotin + ADP + phosphate + 3 H(+). It participates in cofactor biosynthesis; biotin biosynthesis; biotin from 7,8-diaminononanoate: step 1/2. Catalyzes a mechanistically unusual reaction, the ATP-dependent insertion of CO2 between the N7 and N8 nitrogen atoms of 7,8-diaminopelargonic acid (DAPA, also called 7,8-diammoniononanoate) to form a ureido ring. The sequence is that of ATP-dependent dethiobiotin synthetase BioD from Corynebacterium glutamicum (strain R).